Here is a 278-residue protein sequence, read N- to C-terminus: Ribosomal RNA small subunit methyltransferase A (278 aa).

Residues Asn27, Leu29, Gly54, Glu75, Asp101, and Asn122 each coordinate S-adenosyl-L-methionine.

It belongs to the class I-like SAM-binding methyltransferase superfamily. rRNA adenine N(6)-methyltransferase family. RsmA subfamily.

It is found in the cytoplasm. It carries out the reaction adenosine(1518)/adenosine(1519) in 16S rRNA + 4 S-adenosyl-L-methionine = N(6)-dimethyladenosine(1518)/N(6)-dimethyladenosine(1519) in 16S rRNA + 4 S-adenosyl-L-homocysteine + 4 H(+). Its function is as follows. Specifically dimethylates two adjacent adenosines (A1518 and A1519) in the loop of a conserved hairpin near the 3'-end of 16S rRNA in the 30S particle. May play a critical role in biogenesis of 30S subunits. In Brucella anthropi (strain ATCC 49188 / DSM 6882 / CCUG 24695 / JCM 21032 / LMG 3331 / NBRC 15819 / NCTC 12168 / Alc 37) (Ochrobactrum anthropi), this protein is Ribosomal RNA small subunit methyltransferase A.